The primary structure comprises 299 residues: Craniofacial development protein 1 (299 aa).

Acidic residues-rich tracts occupy residues Met1–Tyr18 and Tyr25–Glu43. Disordered stretches follow at residues Met1 to Lys156 and Phe192 to Met224. The span at Gln49–Gln65 shows a compositional bias: basic residues. A compositionally biased stretch (acidic residues) spans Leu70 to Ala94. 3 positions are modified to phosphoserine: Ser82, Ser85, and Ser86. Over residues Glu95–Glu112 the composition is skewed to basic and acidic residues. Ser116 carries the phosphoserine modification. Lys150 is covalently cross-linked (Glycyl lysine isopeptide (Lys-Gly) (interchain with G-Cter in SUMO2)). The segment at Val178–Gly217 is hydrophilic. Basic and acidic residues predominate over residues Phe192–Pro201. Ser216 carries the phosphoserine modification. The 82-residue stretch at Leu218 to Pro299 folds into the BCNT-C domain. An N6-methyllysine modification is found at Lys219. Phosphoserine is present on Ser250.

In terms of processing, phosphorylated by CK2 (casein kinase II) in vitro. As to expression, ubiquitous.

It localises to the chromosome. Its subcellular location is the centromere. The protein localises to the kinetochore. In terms of biological role, may play a role during embryogenesis. The chain is Craniofacial development protein 1 (CFDP1) from Homo sapiens (Human).